Here is a 535-residue protein sequence, read N- to C-terminus: T-complex protein 1 subunit beta (535 aa).

N-acetylmethionine is present on M1. A2 carries the N-acetylalanine modification. Position 3 is a phosphoserine (S3). The residue at position 13 (K13) is an N6-acetyllysine. G44 contacts ADP. Residue G44 participates in ATP binding. A Phosphoserine modification is found at S60. Position 97 (D97) interacts with Mg(2+). The ADP site is built by G98, T99, T100, and S101. ATP-binding residues include G98, T99, and T100. K154 carries the post-translational modification N6-acetyllysine. ADP-binding residues include S168 and S169. Residue K181 is modified to N6-acetyllysine. K248 is covalently cross-linked (Glycyl lysine isopeptide (Lys-Gly) (interchain with G-Cter in SUMO2)). At S260 the chain carries Phosphoserine. T261 carries the phosphothreonine modification. ADP is bound by residues G410, E495, and K500. ATP contacts are provided by E495 and K500.

The protein belongs to the TCP-1 chaperonin family. Component of the chaperonin-containing T-complex (TRiC), a hexadecamer composed of two identical back-to-back stacked rings enclosing a protein folding chamber. Each ring is made up of eight different subunits: TCP1/CCT1, CCT2, CCT3, CCT4, CCT5, CCT6A/CCT6, CCT7, CCT8. Interacts with PACRG. Interacts with FLCN. Interacts with DLEC1. Interacts with SVEP1.

The protein resides in the cytoplasm. It carries out the reaction ATP + H2O = ADP + phosphate + H(+). Its function is as follows. Component of the chaperonin-containing T-complex (TRiC), a molecular chaperone complex that assists the folding of actin, tubulin and other proteins upon ATP hydrolysis. The TRiC complex mediates the folding of WRAP53/TCAB1, thereby regulating telomere maintenance. As part of the TRiC complex may play a role in the assembly of BBSome, a complex involved in ciliogenesis regulating transports vesicles to the cilia. The chain is T-complex protein 1 subunit beta from Homo sapiens (Human).